The primary structure comprises 253 residues: Ubiquinone/menaquinone biosynthesis C-methyltransferase UbiE (253 aa).

S-adenosyl-L-methionine-binding positions include Thr76, Asp97, and 125 to 126; that span reads NA.

Belongs to the class I-like SAM-binding methyltransferase superfamily. MenG/UbiE family.

The catalysed reaction is a 2-demethylmenaquinol + S-adenosyl-L-methionine = a menaquinol + S-adenosyl-L-homocysteine + H(+). The enzyme catalyses a 2-methoxy-6-(all-trans-polyprenyl)benzene-1,4-diol + S-adenosyl-L-methionine = a 5-methoxy-2-methyl-3-(all-trans-polyprenyl)benzene-1,4-diol + S-adenosyl-L-homocysteine + H(+). It participates in quinol/quinone metabolism; menaquinone biosynthesis; menaquinol from 1,4-dihydroxy-2-naphthoate: step 2/2. The protein operates within cofactor biosynthesis; ubiquinone biosynthesis. In terms of biological role, methyltransferase required for the conversion of demethylmenaquinol (DMKH2) to menaquinol (MKH2) and the conversion of 2-polyprenyl-6-methoxy-1,4-benzoquinol (DDMQH2) to 2-polyprenyl-3-methyl-6-methoxy-1,4-benzoquinol (DMQH2). This chain is Ubiquinone/menaquinone biosynthesis C-methyltransferase UbiE, found in Rhodopseudomonas palustris (strain HaA2).